Consider the following 257-residue polypeptide: L-aspartate dehydrogenase (257 aa).

NAD(+) is bound by residues alanine 124 and asparagine 180. Residue histidine 208 is part of the active site.

It belongs to the L-aspartate dehydrogenase family.

The enzyme catalyses L-aspartate + NADP(+) + H2O = oxaloacetate + NH4(+) + NADPH + H(+). It catalyses the reaction L-aspartate + NAD(+) + H2O = oxaloacetate + NH4(+) + NADH + H(+). The protein operates within cofactor biosynthesis; NAD(+) biosynthesis; iminoaspartate from L-aspartate (dehydrogenase route): step 1/1. Its function is as follows. Specifically catalyzes the NAD or NADP-dependent dehydrogenation of L-aspartate to iminoaspartate. The sequence is that of L-aspartate dehydrogenase from Methanothermobacter thermautotrophicus (strain ATCC 29096 / DSM 1053 / JCM 10044 / NBRC 100330 / Delta H) (Methanobacterium thermoautotrophicum).